We begin with the raw amino-acid sequence, 155 residues long: MANVESFDLDHTKVQAPYVRLAGVKTTPRGDQISKYDLRLLQPNRGAIEPAALHTLEHLLAGYLRDHLQNVVDVSPMGCRTGLYLAVIGEPDEEGVLQAFEAALRDTATHDRPIPGVSELECGNYRDHDLQAARQYARDALTQGLKVQKTILLQR.

The Fe cation site is built by histidine 54, histidine 58, and cysteine 122.

This sequence belongs to the LuxS family. As to quaternary structure, homodimer. Fe cation serves as cofactor.

The enzyme catalyses S-(5-deoxy-D-ribos-5-yl)-L-homocysteine = (S)-4,5-dihydroxypentane-2,3-dione + L-homocysteine. In terms of biological role, involved in the synthesis of autoinducer 2 (AI-2) which is secreted by bacteria and is used to communicate both the cell density and the metabolic potential of the environment. The regulation of gene expression in response to changes in cell density is called quorum sensing. Catalyzes the transformation of S-ribosylhomocysteine (RHC) to homocysteine (HC) and 4,5-dihydroxy-2,3-pentadione (DPD). The sequence is that of S-ribosylhomocysteine lyase from Deinococcus geothermalis (strain DSM 11300 / CIP 105573 / AG-3a).